The primary structure comprises 210 residues: GEM-like protein 7 (210 aa).

The GRAM domain maps to 88 to 166 (KIYKRLFKVC…CKINGVNQSQ (79 aa)).

This sequence belongs to the GEM family.

This is GEM-like protein 7 from Arabidopsis thaliana (Mouse-ear cress).